The sequence spans 178 residues: Large ribosomal subunit protein bL25 (178 aa).

Belongs to the bacterial ribosomal protein bL25 family. CTC subfamily. In terms of assembly, part of the 50S ribosomal subunit; part of the 5S rRNA/L5/L18/L25 subcomplex. Contacts the 5S rRNA. Binds to the 5S rRNA independently of L5 and L18.

Functionally, this is one of the proteins that binds to the 5S RNA in the ribosome where it forms part of the central protuberance. The chain is Large ribosomal subunit protein bL25 from Helicobacter pylori (strain ATCC 700392 / 26695) (Campylobacter pylori).